Reading from the N-terminus, the 243-residue chain is Cell division protein FtsQ (243 aa).

Topologically, residues 1–19 are cytoplasmic; sequence MKRYNAKRKTHRNLKSIKK. Residues 20–40 form a helical membrane-spanning segment; that stretch reads LIPTVLALLAFVSLLAGIITL. At 41–243 the chain is on the periplasmic side; sequence HNPKTLPFRQ…SNGLAIQWKN (203 aa). The POTRA domain maps to 46–115; that stretch reads LPFRQIKITV…NELEIQVEEQ (70 aa).

It belongs to the FtsQ/DivIB family. FtsQ subfamily. In terms of assembly, part of a complex composed of FtsB, FtsL and FtsQ.

Its subcellular location is the cell inner membrane. Functionally, essential cell division protein. May link together the upstream cell division proteins, which are predominantly cytoplasmic, with the downstream cell division proteins, which are predominantly periplasmic. May control correct divisome assembly. The sequence is that of Cell division protein FtsQ from Coxiella burnetii (strain RSA 493 / Nine Mile phase I).